A 361-amino-acid polypeptide reads, in one-letter code: Diacylglycerol O-acyltransferase 2 (361 aa).

The Cytoplasmic segment spans residues 1–42 (MKTIIAAYSGVLRGTGSSLLSAVHDLPSIPWLSKSSVVRHLQ). The helical transmembrane segment at 43-61 (IISVLQWVLSFLILGVACT) threads the bilayer. The Lumenal segment spans residues 62–65 (AVLV). The helical transmembrane segment at 66-85 (YIFCTDLWLIAALYFTWMVL) threads the bilayer. At 86-361 (DWNTPYKGGR…LPDSETLEFI (276 aa)) the chain is on the cytoplasmic side.

The protein belongs to the diacylglycerol acyltransferase family.

It localises to the endoplasmic reticulum membrane. Its subcellular location is the lipid droplet. The protein localises to the cytoplasm. The protein resides in the perinuclear region. It catalyses the reaction an acyl-CoA + a 1,2-diacyl-sn-glycerol = a triacyl-sn-glycerol + CoA. The catalysed reaction is all-trans-retinol + an acyl-CoA = an all-trans-retinyl ester + CoA. It carries out the reaction 2-(9Z-octadecenoyl)-glycerol + (9Z)-octadecenoyl-CoA = 1,2-di-(9Z-octadecenoyl)-sn-glycerol + CoA. The enzyme catalyses 1,2-di-(9Z-octadecenoyl)-sn-glycerol + (9Z)-octadecenoyl-CoA = 1,2,3-tri-(9Z-octadecenoyl)-glycerol + CoA. It catalyses the reaction all-trans-retinol + hexadecanoyl-CoA = all-trans-retinyl hexadecanoate + CoA. The catalysed reaction is 1-O-(9Z-octadecenyl)-glycerol + (9Z)-octadecenoyl-CoA = 1-O-(9Z-octadecyl)-3-(9Z-octadecenoyl)-glycerol + CoA. It carries out the reaction 1-(9Z-octadecenoyl)-glycerol + (9Z)-octadecenoyl-CoA = 1,2-di-(9Z-octadecenoyl)-glycerol + CoA. The enzyme catalyses 1,2-di-(9Z-octadecenoyl)-sn-glycerol + hexadecanoyl-CoA = 1,2-di-(9Z)-octadecenoyl-3-hexadecanoyl-sn-glycerol + CoA. It catalyses the reaction 1,3-di-(9Z-octadecenoyl)-glycerol + (9Z)-octadecenoyl-CoA = 1,2,3-tri-(9Z-octadecenoyl)-glycerol + CoA. The catalysed reaction is 2,3-di-(9Z)-octadecenoyl-sn-glycerol + (9Z)-octadecenoyl-CoA = 1,2,3-tri-(9Z-octadecenoyl)-glycerol + CoA. It carries out the reaction 2-(9Z-octadecenoyl)-glycerol + hexadecanoyl-CoA = 1-hexadecanoyl-2-(9Z-octadecenoyl)-sn-glycerol + CoA. It functions in the pathway glycerolipid metabolism; triacylglycerol biosynthesis. In terms of biological role, essential acyltransferase that catalyzes the terminal and only committed step in triacylglycerol synthesis by using diacylglycerol and fatty acyl CoA as substrates. Required for synthesis and storage of intracellular triglycerides. Probably plays a central role in cytosolic lipid accumulation. This is Diacylglycerol O-acyltransferase 2 (dgat2) from Xenopus laevis (African clawed frog).